Reading from the N-terminus, the 140-residue chain is Large ribosomal subunit protein uL22 (140 aa).

The tract at residues alanine 115–glycine 140 is disordered.

It belongs to the universal ribosomal protein uL22 family. Part of the 50S ribosomal subunit.

In terms of biological role, this protein binds specifically to 23S rRNA; its binding is stimulated by other ribosomal proteins, e.g. L4, L17, and L20. It is important during the early stages of 50S assembly. It makes multiple contacts with different domains of the 23S rRNA in the assembled 50S subunit and ribosome. Functionally, the globular domain of the protein is located near the polypeptide exit tunnel on the outside of the subunit, while an extended beta-hairpin is found that lines the wall of the exit tunnel in the center of the 70S ribosome. The protein is Large ribosomal subunit protein uL22 of Heliobacterium modesticaldum (strain ATCC 51547 / Ice1).